A 416-amino-acid chain; its full sequence is S-layer protein B (416 aa).

The signal sequence occupies residues 1 to 20; the sequence is MKYNLLPLILLSLLVAPLLA. The stretch at 310–330 forms a coiled coil; it reads IASLNSTIQSLESQISSLSST. Residues 392 to 412 traverse the membrane as a helical segment; it reads IALAVSIIAIIISIVVLILVF.

The protein belongs to the Sulfolobales SlaB family. In terms of assembly, the mushroom-shaped unit cells of the Sulfolobales' S-layers may consist of three SlaB subunits and six SlaA subunits.

The protein localises to the secreted. The protein resides in the cell wall. It is found in the S-layer. Its subcellular location is the cell membrane. Functionally, S-layer small protein. May anchor the complex to the cell membrane. The chain is S-layer protein B from Metallosphaera sedula (strain ATCC 51363 / DSM 5348 / JCM 9185 / NBRC 15509 / TH2).